The sequence spans 956 residues: Lon protease homolog, mitochondrial 1 (956 aa).

2 disordered regions span residues 37–57 and 83–123; these read NNNN…NNNN and KKKG…GNEK. A compositionally biased stretch (basic and acidic residues) spans 91-123; the sequence is NNDDNDNEKNEKNEKKVKNEKKEKNEKNDGNEK. The 199-residue stretch at 159–357 folds into the Lon N-terminal domain; that stretch reads VVIYPSNSVN…MLYHMILNEQ (199 aa). 511–518 contributes to the ATP binding site; that stretch reads GPPGTGKT. The region spanning 747 to 945 is the Lon proteolytic domain; sequence VTPIGVVNGL…KDVFEVAFPN (199 aa). A compositionally biased stretch (low complexity) spans 777-795; sequence KPLSSLPPSQQQQNQLEPS. Positions 777-800 are disordered; it reads KPLSSLPPSQQQQNQLEPSIKTTG. Active-site residues include Ser-851 and Lys-894.

It belongs to the peptidase S16 family. In terms of assembly, homohexamer or homoheptamer. Organized in a ring with a central cavity.

It localises to the mitochondrion matrix. The catalysed reaction is Hydrolysis of proteins in presence of ATP.. ATP-dependent serine protease that mediates the selective degradation of misfolded, unassembled or oxidatively damaged polypeptides as well as certain short-lived regulatory proteins in the mitochondrial matrix. May also have a chaperone function in the assembly of inner membrane protein complexes. Participates in the regulation of mitochondrial gene expression and in the maintenance of the integrity of the mitochondrial genome. Binds to mitochondrial DNA in a site-specific manner. The polypeptide is Lon protease homolog, mitochondrial 1 (Dictyostelium discoideum (Social amoeba)).